We begin with the raw amino-acid sequence, 360 residues long: ACT1-like protein (360 aa).

A disordered region spans residues 339–360; sequence KKQSHNNANDHHEDSMNYSITQ.

Interacts with the receptor complex composed of ilcr-1 and ilcr-2. Also interacts with pik-1. Expressed in neurons.

In terms of biological role, may act as an adapter to facilitate downstream signaling for the receptor complex composed of ilcr-1 and ilcr-2, which is a signaling complex that modulates neuronal activity and animal behavior in response to sensory neuron input. The chain is ACT1-like protein from Caenorhabditis elegans.